The following is a 151-amino-acid chain: Small ribosomal subunit protein uS19 (151 aa).

Residues Met-1–Thr-23 are disordered. Residues Ser-11 to Thr-23 are compositionally biased toward basic residues.

This sequence belongs to the universal ribosomal protein uS19 family.

Its function is as follows. Protein S19 forms a complex with S13 that binds strongly to the 16S ribosomal RNA. This is Small ribosomal subunit protein uS19 (rps19) from Thermoplasma volcanium (strain ATCC 51530 / DSM 4299 / JCM 9571 / NBRC 15438 / GSS1).